Here is a 389-residue protein sequence, read N- to C-terminus: Phospho-N-acetylmuramoyl-pentapeptide-transferase (389 aa).

10 consecutive transmembrane segments (helical) span residues 25–45, 73–93, 97–117, 135–155, 189–209, 222–242, 259–279, 286–306, 311–331, and 366–386; these read RAVAATITALLIGLVCGPWVI, TMGGVLILIGIAVSTLLWADL, FIWIVMLVTFGFGVIGWVDDY, FWQSLIGLFAAVYLAFSVSEA, SMTYPLGVWGFIALTYLVIVG, GLVIMPVVLVGSSLGVFAYVM, AGEMLIFCSAMGGAGLAFLWF, VFMGDVGALALGGALGTIAVI, IVLFIMGGIFVAETVSVMLQV, and QVVVRFWIITLMLCLFGLSTL.

This sequence belongs to the glycosyltransferase 4 family. MraY subfamily. Requires Mg(2+) as cofactor.

Its subcellular location is the cell inner membrane. The enzyme catalyses UDP-N-acetyl-alpha-D-muramoyl-L-alanyl-gamma-D-glutamyl-meso-2,6-diaminopimeloyl-D-alanyl-D-alanine + di-trans,octa-cis-undecaprenyl phosphate = di-trans,octa-cis-undecaprenyl diphospho-N-acetyl-alpha-D-muramoyl-L-alanyl-D-glutamyl-meso-2,6-diaminopimeloyl-D-alanyl-D-alanine + UMP. It participates in cell wall biogenesis; peptidoglycan biosynthesis. Functionally, catalyzes the initial step of the lipid cycle reactions in the biosynthesis of the cell wall peptidoglycan: transfers peptidoglycan precursor phospho-MurNAc-pentapeptide from UDP-MurNAc-pentapeptide onto the lipid carrier undecaprenyl phosphate, yielding undecaprenyl-pyrophosphoryl-MurNAc-pentapeptide, known as lipid I. In Paraburkholderia phymatum (strain DSM 17167 / CIP 108236 / LMG 21445 / STM815) (Burkholderia phymatum), this protein is Phospho-N-acetylmuramoyl-pentapeptide-transferase.